A 550-amino-acid polypeptide reads, in one-letter code: MASARRWARKAERCCCTFATYFPLAFVYGLTSWAVWVVVNIGSVSTKSSWIGTGSSIVGVALYVMLNWCYTTAVFTPPGSTTNDMGYGLLPTQNTPQATSFTVKSNGEFRFCKKCQARKPDRAHHCSTCRRCVLKMDHHCPWLATCIGLRNHKAFLLFLIYTSLFCFWSFAVSACWVWYEALNDQEYIDSFLPVNFIMLSVISGIIGLVVGAFTSWHIHLARCGQTTIECLEKTRYLSPLRKTYNSAHNPANEVPEAARHFVDFHANALPGITRPEEGEERREMPRSYPPDGSQPVQLSYAQREREQRQRRYEEYLDEQDSEKLPNVFDLGWKRNLLHLFGPTPALWFFPVSNTTGDGWTWEASSTWLEARDRLSAEREQQRAREVNAGWGSPDDIPDIPERPTGAGKHYSPSPNLAGPKTMSKADRVLGRDPNLYADATQDVPMQRLSPRGRSIDDELADLDTDDEDGFLDANNPDKAEGGKFSPSFTSDSHRRDDAEARALEVVTNGNWGRGGASGMLRKGSSQSTPTRTPSNLSRSGTPKFQDEGVD.

Residues 1-21 (MASARRWARKAERCCCTFATY) are Cytoplasmic-facing. The chain crosses the membrane as a helical span at residues 22–42 (FPLAFVYGLTSWAVWVVVNIG). Topologically, residues 43–56 (SVSTKSSWIGTGSS) are extracellular. The helical transmembrane segment at 57–77 (IVGVALYVMLNWCYTTAVFTP) threads the bilayer. The Cytoplasmic portion of the chain corresponds to 78–153 (PGSTTNDMGY…ATCIGLRNHK (76 aa)). One can recognise a DHHC domain in the interval 110-160 (RFCKKCQARKPDRAHHCSTCRRCVLKMDHHCPWLATCIGLRNHKAFLLFLI). Residues 154-174 (AFLLFLIYTSLFCFWSFAVSA) form a helical membrane-spanning segment. At 175 to 190 (CWVWYEALNDQEYIDS) the chain is on the extracellular side. Residues 191-211 (FLPVNFIMLSVISGIIGLVVG) form a helical membrane-spanning segment. Residues 212 to 550 (AFTSWHIHLA…TPKFQDEGVD (339 aa)) lie on the Cytoplasmic side of the membrane. Disordered stretches follow at residues 272 to 304 (ITRP…AQRE), 378 to 422 (REQQ…PKTM), and 434 to 550 (NLYA…EGVD). A compositionally biased stretch (basic and acidic residues) spans 274–285 (RPEEGEERREMP). Over residues 457–470 (DELADLDTDDEDGF) the composition is skewed to acidic residues. The segment covering 491–502 (DSHRRDDAEARA) has biased composition (basic and acidic residues). Residues 523–542 (GSSQSTPTRTPSNLSRSGTP) are compositionally biased toward polar residues.

This sequence belongs to the DHHC palmitoyltransferase family. PFA3 subfamily. Post-translationally, autopalmitoylated.

It localises to the vacuole membrane. The catalysed reaction is L-cysteinyl-[protein] + hexadecanoyl-CoA = S-hexadecanoyl-L-cysteinyl-[protein] + CoA. Functionally, palmitoyltransferase specific for VAC8. Palmitoylates VAC8 at one or more of its N-terminal cysteine residues, which is required for its proper membrane localization. The sequence is that of Palmitoyltransferase PFA3 (PFA3) from Gibberella zeae (strain ATCC MYA-4620 / CBS 123657 / FGSC 9075 / NRRL 31084 / PH-1) (Wheat head blight fungus).